Here is a 107-residue protein sequence, read N- to C-terminus: Large ribosomal subunit protein uL24 (107 aa).

Belongs to the universal ribosomal protein uL24 family. As to quaternary structure, part of the 50S ribosomal subunit.

In terms of biological role, one of two assembly initiator proteins, it binds directly to the 5'-end of the 23S rRNA, where it nucleates assembly of the 50S subunit. Its function is as follows. One of the proteins that surrounds the polypeptide exit tunnel on the outside of the subunit. This Thermoanaerobacter pseudethanolicus (strain ATCC 33223 / 39E) (Clostridium thermohydrosulfuricum) protein is Large ribosomal subunit protein uL24.